The sequence spans 83 residues: MGGLSLPHLIVLALVVLILFGRGRISEMMGDFGKGIKSFKQGMNDEDSKPVTPPPAQIPPASLQQTPPPAQPAPQPTSTDQAQ.

Residues 1–21 (MGGLSLPHLIVLALVVLILFG) form a helical membrane-spanning segment. Positions 34–83 (KGIKSFKQGMNDEDSKPVTPPPAQIPPASLQQTPPPAQPAPQPTSTDQAQ) are disordered. Pro residues predominate over residues 66–75 (TPPPAQPAPQ).

Belongs to the TatA/E family. In terms of assembly, the Tat system comprises two distinct complexes: a TatABC complex, containing multiple copies of TatA, TatB and TatC subunits, and a separate TatA complex, containing only TatA subunits. Substrates initially bind to the TatABC complex, which probably triggers association of the separate TatA complex to form the active translocon.

It is found in the cell inner membrane. Part of the twin-arginine translocation (Tat) system that transports large folded proteins containing a characteristic twin-arginine motif in their signal peptide across membranes. TatA could form the protein-conducting channel of the Tat system. In Novosphingobium aromaticivorans (strain ATCC 700278 / DSM 12444 / CCUG 56034 / CIP 105152 / NBRC 16084 / F199), this protein is Sec-independent protein translocase protein TatA.